The following is a 263-amino-acid chain: Formamidopyrimidine-DNA glycosylase (263 aa).

Pro-2 acts as the Schiff-base intermediate with DNA in catalysis. Catalysis depends on Glu-3, which acts as the Proton donor. The active-site Proton donor; for beta-elimination activity is the Lys-59. DNA contacts are provided by His-93 and Arg-111. The FPG-type zinc-finger motif lies at 229-263 (KVYGKNGSLCVRCNNVLIRERHAGRSTHYCPHCQK). The Proton donor; for delta-elimination activity role is filled by Arg-253.

The protein belongs to the FPG family. Monomer. Requires Zn(2+) as cofactor.

It catalyses the reaction Hydrolysis of DNA containing ring-opened 7-methylguanine residues, releasing 2,6-diamino-4-hydroxy-5-(N-methyl)formamidopyrimidine.. The enzyme catalyses 2'-deoxyribonucleotide-(2'-deoxyribose 5'-phosphate)-2'-deoxyribonucleotide-DNA = a 3'-end 2'-deoxyribonucleotide-(2,3-dehydro-2,3-deoxyribose 5'-phosphate)-DNA + a 5'-end 5'-phospho-2'-deoxyribonucleoside-DNA + H(+). Its function is as follows. Involved in base excision repair of DNA damaged by oxidation or by mutagenic agents. Acts as a DNA glycosylase that recognizes and removes damaged bases. Has a preference for oxidized purines, such as 7,8-dihydro-8-oxoguanine (8-oxoG). Has AP (apurinic/apyrimidinic) lyase activity and introduces nicks in the DNA strand. Cleaves the DNA backbone by beta-delta elimination to generate a single-strand break at the site of the removed base with both 3'- and 5'-phosphates. The sequence is that of Formamidopyrimidine-DNA glycosylase from Carboxydothermus hydrogenoformans (strain ATCC BAA-161 / DSM 6008 / Z-2901).